The primary structure comprises 426 residues: Trigger factor (426 aa).

One can recognise a PPIase FKBP-type domain in the interval 166-249 (GDIVTFDFKG…IIEVKARELP (84 aa)).

It belongs to the FKBP-type PPIase family. Tig subfamily.

The protein resides in the cytoplasm. The enzyme catalyses [protein]-peptidylproline (omega=180) = [protein]-peptidylproline (omega=0). In terms of biological role, involved in protein export. Acts as a chaperone by maintaining the newly synthesized protein in an open conformation. Functions as a peptidyl-prolyl cis-trans isomerase. This chain is Trigger factor, found in Mesoplasma florum (strain ATCC 33453 / NBRC 100688 / NCTC 11704 / L1) (Acholeplasma florum).